A 561-amino-acid polypeptide reads, in one-letter code: Proline--tRNA ligase (561 aa).

Belongs to the class-II aminoacyl-tRNA synthetase family. ProS type 1 subfamily. In terms of assembly, homodimer.

It is found in the cytoplasm. It catalyses the reaction tRNA(Pro) + L-proline + ATP = L-prolyl-tRNA(Pro) + AMP + diphosphate. Functionally, catalyzes the attachment of proline to tRNA(Pro) in a two-step reaction: proline is first activated by ATP to form Pro-AMP and then transferred to the acceptor end of tRNA(Pro). As ProRS can inadvertently accommodate and process non-cognate amino acids such as alanine and cysteine, to avoid such errors it has two additional distinct editing activities against alanine. One activity is designated as 'pretransfer' editing and involves the tRNA(Pro)-independent hydrolysis of activated Ala-AMP. The other activity is designated 'posttransfer' editing and involves deacylation of mischarged Ala-tRNA(Pro). The misacylated Cys-tRNA(Pro) is not edited by ProRS. This chain is Proline--tRNA ligase, found in Thermosipho africanus (strain TCF52B).